Consider the following 1089-residue polypeptide: Pentatricopeptide repeat-containing protein MRL1, chloroplastic (1089 aa).

The N-terminal 72 residues, 1-72 (MEVTSTTFIS…SIRSPRLVVR (72 aa)), are a transit peptide targeting the chloroplast. 10 PPR repeats span residues 466–500 (TMST…GMTA), 501–535 (DCKL…GVEA), 536–570 (NLHT…NVKP), 571–605 (DRVV…THPI), 608–642 (DHIS…GIRG), 643–677 (TPEV…DVTP), 678–712 (DEVF…GIRL), 713–747 (GTIS…KLRP), 748–782 (TIST…GLKP), and 783–817 (NTIT…GVSP).

Belongs to the PPR family. P subfamily. As to expression, expressed in stems, leaves and sepals.

It is found in the plastid. The protein localises to the chloroplast. Functionally, regulator of the large subunit (LS) of RuBisCO. Involved either in the processing or in the stabilization of the processed transcript, probably by acting as a barrier to the 5'&gt;3' degradation. In Arabidopsis thaliana (Mouse-ear cress), this protein is Pentatricopeptide repeat-containing protein MRL1, chloroplastic (MRL1).